The chain runs to 954 residues: Glycine dehydrogenase (decarboxylating) (954 aa).

Position 704 is an N6-(pyridoxal phosphate)lysine (lysine 704).

The protein belongs to the GcvP family. As to quaternary structure, the glycine cleavage system is composed of four proteins: P, T, L and H. Pyridoxal 5'-phosphate is required as a cofactor.

It catalyses the reaction N(6)-[(R)-lipoyl]-L-lysyl-[glycine-cleavage complex H protein] + glycine + H(+) = N(6)-[(R)-S(8)-aminomethyldihydrolipoyl]-L-lysyl-[glycine-cleavage complex H protein] + CO2. In terms of biological role, the glycine cleavage system catalyzes the degradation of glycine. The P protein binds the alpha-amino group of glycine through its pyridoxal phosphate cofactor; CO(2) is released and the remaining methylamine moiety is then transferred to the lipoamide cofactor of the H protein. In Agrobacterium fabrum (strain C58 / ATCC 33970) (Agrobacterium tumefaciens (strain C58)), this protein is Glycine dehydrogenase (decarboxylating).